A 422-amino-acid polypeptide reads, in one-letter code: Cystine lyase CORI3 (422 aa).

The protein belongs to the class-I pyridoxal-phosphate-dependent aminotransferase family. In terms of assembly, homodimer. Pyridoxal 5'-phosphate serves as cofactor. In terms of tissue distribution, expressed in cotyledons, sepals, pistils, flower buds, phloem companion cells and vascular tissues of petiole, leaf, filament and fruit.

The catalysed reaction is L-cystine + H2O = S-sulfanyl-L-cysteine + pyruvate + NH4(+). Its function is as follows. Possesses cystine lyase activity in vitro. Does not possess tyrosine aminotransferase, alanine aminotransferase, aspartate aminotransferase and tryptophan aminotransferase activities. The polypeptide is Cystine lyase CORI3 (Arabidopsis thaliana (Mouse-ear cress)).